A 104-amino-acid polypeptide reads, in one-letter code: Cell cycle protein GpsB (104 aa).

Residues 34–72 (LDVVIQDYEVFQKKIERLEQEIHQLRTEAKRAASERQTR) adopt a coiled-coil conformation. Residues 60 to 71 (TEAKRAASERQT) are compositionally biased toward basic and acidic residues. Residues 60-82 (TEAKRAASERQTRHQTSPSVGST) are disordered. The segment covering 73–82 (HQTSPSVGST) has biased composition (polar residues).

This sequence belongs to the GpsB family. As to quaternary structure, forms polymers through the coiled coil domains. Interacts with PBP1, MreC and EzrA.

It is found in the cytoplasm. Its function is as follows. Divisome component that associates with the complex late in its assembly, after the Z-ring is formed, and is dependent on DivIC and PBP2B for its recruitment to the divisome. Together with EzrA, is a key component of the system that regulates PBP1 localization during cell cycle progression. Its main role could be the removal of PBP1 from the cell pole after pole maturation is completed. Also contributes to the recruitment of PBP1 to the division complex. Not essential for septum formation. In Halalkalibacterium halodurans (strain ATCC BAA-125 / DSM 18197 / FERM 7344 / JCM 9153 / C-125) (Bacillus halodurans), this protein is Cell cycle protein GpsB.